Reading from the N-terminus, the 444-residue chain is Glutamyl-tRNA reductase (444 aa).

Substrate-binding positions include 41-44, Ser-102, 107-109, and Gln-113; these read TCNR and ERE. Catalysis depends on Cys-42, which acts as the Nucleophile. NADP(+) is bound at residue 181–186; that stretch reads GTGSYA.

It belongs to the glutamyl-tRNA reductase family. Homodimer.

It carries out the reaction (S)-4-amino-5-oxopentanoate + tRNA(Glu) + NADP(+) = L-glutamyl-tRNA(Glu) + NADPH + H(+). It participates in porphyrin-containing compound metabolism; protoporphyrin-IX biosynthesis; 5-aminolevulinate from L-glutamyl-tRNA(Glu): step 1/2. Functionally, catalyzes the NADPH-dependent reduction of glutamyl-tRNA(Glu) to glutamate 1-semialdehyde (GSA). This Cutibacterium acnes (strain DSM 16379 / KPA171202) (Propionibacterium acnes) protein is Glutamyl-tRNA reductase.